Here is a 106-residue protein sequence, read N- to C-terminus: L-rhamnose mutarotase (106 aa).

Tyr-20 is a substrate binding site. His-24 serves as the catalytic Proton donor. Substrate-binding positions include Tyr-43 and 78-79 (WW).

It belongs to the rhamnose mutarotase family. Homodimer.

Its subcellular location is the cytoplasm. It carries out the reaction alpha-L-rhamnose = beta-L-rhamnose. It participates in carbohydrate metabolism; L-rhamnose metabolism. In terms of biological role, involved in the anomeric conversion of L-rhamnose. The polypeptide is L-rhamnose mutarotase (Brucella anthropi (strain ATCC 49188 / DSM 6882 / CCUG 24695 / JCM 21032 / LMG 3331 / NBRC 15819 / NCTC 12168 / Alc 37) (Ochrobactrum anthropi)).